A 231-amino-acid chain; its full sequence is ATP phosphoribosyltransferase (231 aa).

The protein belongs to the ATP phosphoribosyltransferase family. Short subfamily. In terms of assembly, heteromultimer composed of HisG and HisZ subunits.

Its subcellular location is the cytoplasm. It catalyses the reaction 1-(5-phospho-beta-D-ribosyl)-ATP + diphosphate = 5-phospho-alpha-D-ribose 1-diphosphate + ATP. Its pathway is amino-acid biosynthesis; L-histidine biosynthesis; L-histidine from 5-phospho-alpha-D-ribose 1-diphosphate: step 1/9. Its function is as follows. Catalyzes the condensation of ATP and 5-phosphoribose 1-diphosphate to form N'-(5'-phosphoribosyl)-ATP (PR-ATP). Has a crucial role in the pathway because the rate of histidine biosynthesis seems to be controlled primarily by regulation of HisG enzymatic activity. This Sinorhizobium medicae (strain WSM419) (Ensifer medicae) protein is ATP phosphoribosyltransferase.